A 202-amino-acid polypeptide reads, in one-letter code: Complement component C8 gamma chain (202 aa).

The first 23 residues, 1-23 (MVLRGRAVLLAVLLAAGSLGRWA), serve as a signal peptide directing secretion. Cys-96 and Cys-188 are disulfide-bonded. Asn-173 carries an N-linked (GlcNAc...) asparagine glycan.

It belongs to the calycin superfamily. Lipocalin family. In terms of assembly, heterotrimer of 3 chains: alpha (C8A), beta (C8B) and gamma (C8G); the alpha and gamma chains are disulfide bonded. Component of the membrane attack complex (MAC), composed of complement C5b, C6, C7, C8A, C8B, C8G and multiple copies of the pore-forming subunit C9.

It localises to the secreted. The protein resides in the target cell membrane. Membrane attack complex (MAC) assembly is inhibited by CD59, thereby protecting self-cells from damage during complement activation. MAC assembly is also inhibited by clusterin (CLU) chaperones that inhibit polymerization of C9. Component of the membrane attack complex (MAC), a multiprotein complex activated by the complement cascade, which inserts into a target cell membrane and forms a pore, leading to target cell membrane rupture and cell lysis. The MAC is initiated by proteolytic cleavage of C5 into complement C5b in response to the classical, alternative, lectin and GZMK complement pathways. The complement pathways consist in a cascade of proteins that leads to phagocytosis and breakdown of pathogens and signaling that strengthens the adaptive immune system. C8G, together with C8A and C8B, inserts into the target membrane, but does not form pores by itself. During MAC assembly, associates with C5b, C6 and C7 to form the C5b8 intermediate complex that inserts into the target membrane and traverses the bilayer increasing membrane rigidity. The polypeptide is Complement component C8 gamma chain (C8G) (Oryctolagus cuniculus (Rabbit)).